The sequence spans 319 residues: Guanidinobutyrase (319 aa).

6 residues coordinate Mn(2+): H129, D152, H154, D156, D243, and D245.

Belongs to the arginase family. Agmatinase subfamily. In terms of assembly, homohexamer. Mn(2+) serves as cofactor.

The catalysed reaction is 4-guanidinobutanoate + H2O = urea + 4-aminobutanoate. Functionally, catalyzes specifically the hydrolysis of 4-guanidinobutanoate to 4-aminobutanoate and urea. Has no activity against arginine, agmatine, 3-guanidinopropionate and guanidinoacetate. The chain is Guanidinobutyrase (gbuA) from Pseudomonas aeruginosa (strain ATCC 15692 / DSM 22644 / CIP 104116 / JCM 14847 / LMG 12228 / 1C / PRS 101 / PAO1).